Consider the following 243-residue polypeptide: tRNA1(Val) (adenine(37)-N6)-methyltransferase (243 aa).

This sequence belongs to the methyltransferase superfamily. tRNA (adenine-N(6)-)-methyltransferase family.

It is found in the cytoplasm. It carries out the reaction adenosine(37) in tRNA1(Val) + S-adenosyl-L-methionine = N(6)-methyladenosine(37) in tRNA1(Val) + S-adenosyl-L-homocysteine + H(+). In terms of biological role, specifically methylates the adenine in position 37 of tRNA(1)(Val) (anticodon cmo5UAC). In Shewanella loihica (strain ATCC BAA-1088 / PV-4), this protein is tRNA1(Val) (adenine(37)-N6)-methyltransferase.